Consider the following 254-residue polypeptide: MTPLICAADLSVSHGGDLPVLSHVDFLIRPGEIVTVVGPNGSGKSTLVRALLGHVSLSSGRVERVPGLRIGYVPQRVHIERAMPMTVRRFLSLPRRVGDAQAAAALERTGVPGLEGRQITALSGGQFQRVLLARALLGDPQLLVLDEPTQGLDQPGIVAFYKLIEEVRAETRAAVLMVSHDLLVVMRASDRVVCLNGHICCEGTPQAVSAAPAYRALFGSEAQGTLALYQHHHDHDHDHVAEGHRHGPACAHPH.

Positions 5-221 (ICAADLSVSH…PAYRALFGSE (217 aa)) constitute an ABC transporter domain. ATP is bound at residue 38-45 (GPNGSGKS). The span at 234–245 (DHDHDHVAEGHR) shows a compositional bias: basic and acidic residues. The interval 234–254 (DHDHDHVAEGHRHGPACAHPH) is disordered.

Belongs to the ABC transporter superfamily. Zinc importer (TC 3.A.1.15.5) family. As to quaternary structure, the complex is composed of two ATP-binding proteins (ZnuC), two transmembrane proteins (ZnuB) and a solute-binding protein (ZnuA).

It is found in the cell inner membrane. The catalysed reaction is Zn(2+)(out) + ATP(in) + H2O(in) = Zn(2+)(in) + ADP(in) + phosphate(in) + H(+)(in). Its function is as follows. Part of the ABC transporter complex ZnuABC involved in zinc import. Responsible for energy coupling to the transport system. This chain is Zinc import ATP-binding protein ZnuC, found in Paracoccus denitrificans (strain Pd 1222).